Here is a 75-residue protein sequence, read N- to C-terminus: Small ribosomal subunit protein bS18 (75 aa).

This sequence belongs to the bacterial ribosomal protein bS18 family. As to quaternary structure, part of the 30S ribosomal subunit. Forms a tight heterodimer with protein bS6.

Its function is as follows. Binds as a heterodimer with protein bS6 to the central domain of the 16S rRNA, where it helps stabilize the platform of the 30S subunit. The polypeptide is Small ribosomal subunit protein bS18 (Pasteurella multocida (strain Pm70)).